The chain runs to 332 residues: Fructose-1,6-bisphosphatase class 1 (332 aa).

Residues Glu-89, Asp-110, Leu-112, and Asp-113 each contribute to the Mg(2+) site. Residues 113–116, Asn-206, Tyr-239, 257–259, and Lys-269 contribute to the substrate site; these read DGSS and YLY. Glu-275 contributes to the Mg(2+) binding site.

Belongs to the FBPase class 1 family. Homotetramer. Mg(2+) is required as a cofactor.

It is found in the cytoplasm. The enzyme catalyses beta-D-fructose 1,6-bisphosphate + H2O = beta-D-fructose 6-phosphate + phosphate. It functions in the pathway carbohydrate biosynthesis; gluconeogenesis. This is Fructose-1,6-bisphosphatase class 1 from Escherichia coli (strain ATCC 8739 / DSM 1576 / NBRC 3972 / NCIMB 8545 / WDCM 00012 / Crooks).